A 65-amino-acid chain; its full sequence is Sodium channel neurotoxin MeuNaTxalpha-9 (65 aa).

Positions 2 to 64 (RDGYIANDRN…VPIRIPGECR (63 aa)) constitute an LCN-type CS-alpha/beta domain. Cystine bridges form between cysteine 12/cysteine 63, cysteine 16/cysteine 36, cysteine 22/cysteine 46, and cysteine 26/cysteine 48. Arginine 64 is modified (arginine amide).

The protein belongs to the long (4 C-C) scorpion toxin superfamily. Sodium channel inhibitor family. Alpha subfamily. In terms of tissue distribution, expressed by the venom gland.

Its subcellular location is the secreted. In terms of biological role, alpha toxins bind voltage-independently at site-3 of sodium channels (Nav) and inhibit the inactivation of the activated channels, thereby blocking neuronal transmission. The chain is Sodium channel neurotoxin MeuNaTxalpha-9 from Mesobuthus eupeus (Lesser Asian scorpion).